We begin with the raw amino-acid sequence, 279 residues long: Thiazole synthase (279 aa).

Lys-116 acts as the Schiff-base intermediate with DXP in catalysis. 1-deoxy-D-xylulose 5-phosphate contacts are provided by residues Gly-177, 203–204 (AG), and 225–226 (NS).

It belongs to the ThiG family. In terms of assembly, homotetramer. Forms heterodimers with either ThiH or ThiS.

Its subcellular location is the cytoplasm. The catalysed reaction is [ThiS sulfur-carrier protein]-C-terminal-Gly-aminoethanethioate + 2-iminoacetate + 1-deoxy-D-xylulose 5-phosphate = [ThiS sulfur-carrier protein]-C-terminal Gly-Gly + 2-[(2R,5Z)-2-carboxy-4-methylthiazol-5(2H)-ylidene]ethyl phosphate + 2 H2O + H(+). Its pathway is cofactor biosynthesis; thiamine diphosphate biosynthesis. Its function is as follows. Catalyzes the rearrangement of 1-deoxy-D-xylulose 5-phosphate (DXP) to produce the thiazole phosphate moiety of thiamine. Sulfur is provided by the thiocarboxylate moiety of the carrier protein ThiS. In vitro, sulfur can be provided by H(2)S. In Trichodesmium erythraeum (strain IMS101), this protein is Thiazole synthase.